A 560-amino-acid chain; its full sequence is Membrane protein insertase YidC (560 aa).

The next 6 membrane-spanning stretches (helical) occupy residues 5–25, 334–354, 357–377, 431–451, 476–496, and 522–542; these read IINL…WQYF, AIDF…MNFF, YVGN…LLMF, LPIL…YVTI, LFGL…WPIL, and FMPL…LIYW.

It belongs to the OXA1/ALB3/YidC family. Type 1 subfamily. Interacts with the Sec translocase complex via SecD. Specifically interacts with transmembrane segments of nascent integral membrane proteins during membrane integration.

The protein resides in the cell inner membrane. Functionally, required for the insertion and/or proper folding and/or complex formation of integral membrane proteins into the membrane. Involved in integration of membrane proteins that insert both dependently and independently of the Sec translocase complex, as well as at least some lipoproteins. Aids folding of multispanning membrane proteins. The chain is Membrane protein insertase YidC from Rickettsia rickettsii (strain Iowa).